Here is a 297-residue protein sequence, read N- to C-terminus: Ribosomal RNA small subunit methyltransferase H (297 aa).

Residues Gly37–His39, Glu56, Phe87, Asp102, and His109 contribute to the S-adenosyl-L-methionine site.

The protein belongs to the methyltransferase superfamily. RsmH family.

The protein localises to the cytoplasm. The catalysed reaction is cytidine(1402) in 16S rRNA + S-adenosyl-L-methionine = N(4)-methylcytidine(1402) in 16S rRNA + S-adenosyl-L-homocysteine + H(+). Its function is as follows. Specifically methylates the N4 position of cytidine in position 1402 (C1402) of 16S rRNA. The sequence is that of Ribosomal RNA small subunit methyltransferase H from Borrelia recurrentis (strain A1).